The following is a 1802-amino-acid chain: Signaling mucin HKR1 (1802 aa).

A signal peptide spans 1–21 (MVSLKIKKILLLVSLLNAIEA). Over 22–1485 (YSNDTIYSTS…SASAGKYAVK (1464 aa)) the chain is Extracellular. An N-linked (GlcNAc...) asparagine glycan is attached at N24. Disordered stretches follow at residues 47–176 (ISST…PREI) and 261–311 (YSSS…VSRP). Over residues 54 to 81 (NKENAITSSSETTTMAGQYGESGSTTIM) the composition is skewed to polar residues. A compositionally biased stretch (low complexity) spans 88–107 (TSSQYISVTTTTQTSDTMSS). Residues 113-143 (EIATPSSSIVPTPLQSYSDESQISQTLSHNP) show a composition bias toward polar residues. 2 stretches are compositionally biased toward low complexity: residues 145–172 (SVAESDSDTTSSESSSSVIISTSDSSAV) and 261–302 (YSSS…SESS). The stretch at 453–480 (SVPVAVSSTYTSSPSASVVVPSAYASSP) is one 1; approximate repeat. The segment at 453–788 (SVPVAVSSTY…VLSSTSTSSP (336 aa)) is 12 X 28 AA tandem repeats of S-[AV]-[P]-V-A-V-S-S-T-Y-T-S-S-P-S-A-P-A-A-I-S-S-T-Y-T-S-S-P. 11 repeat units span residues 481–508 (SVPVAVSSTYTSSPSAPAAISSTYTSSP), 509–536 (SAPVAVSSTYTSSPSAPAAISSTYTSSP), 537–564 (SAPVAVSSTYTSSPSAPAAISSTYTSSP), 565–592 (SAPVAVSSTYTSSPSAPVAISSTYTSSP), 593–620 (SVPVAVSSTYTSSPSAPAAISSTYTSSP), 621–648 (SAPVAVSSTYTSSPSAPAAISSTYTSSP), 649–676 (SVPVAVSSTYTSSPSAPAAISSTYTSSP), 677–704 (SVPVAVSSTYTSSPSAPAAISSTYTSSP), 705–732 (SAPVAVSSTYTSSPSAPAAISSTYTSSP), 733–760 (SAPVAVSSTYTSSPSAPAAISSTYTSSP), and 761–788 (SAPVAVSSTYTSSPSALVVLSSTSTSSP). Disordered regions lie at residues 961 to 984 (SLQSQLSSSTKNPYDTANKNTETS) and 1067 to 1165 (ETIP…SYSR). Composition is skewed to polar residues over residues 970–984 (TKNPYDTANKNTETS) and 1071–1123 (ASKS…TNTK). The span at 1136 to 1165 (TMGENGEETGLTTTKTQYKSSSETSGSYSR) shows a compositional bias: low complexity. N-linked (GlcNAc...) asparagine glycosylation is found at N1252, N1293, N1342, and N1400. The helical transmembrane segment at 1486–1506 (IIIFLIVLTIGVLLWLFVAFF) threads the bilayer. Over 1507–1802 (AFRHRNILLK…KQQNHQTTKI (296 aa)) the chain is Cytoplasmic. The disordered stretch occupies residues 1534-1559 (ESTELSRSSSGNQVYNEKPPESENES).

It belongs to the HKR1/MSB2 family. Post-translationally, could be O-glycosylated in the serine/threonine-rich domain.

It localises to the cell membrane. In terms of biological role, plasma membrane signaling mucin that promotes activation of the MAPK for the filamentous growth pathway. May regulate beta-glucan synthesis. Overexpression provides resistance to HM-1 killer toxin. The protein is Signaling mucin HKR1 (HKR1) of Saccharomyces cerevisiae (strain ATCC 204508 / S288c) (Baker's yeast).